We begin with the raw amino-acid sequence, 370 residues long: Histidinol-phosphate aminotransferase 1 (370 aa).

At Lys-229 the chain carries N6-(pyridoxal phosphate)lysine.

The protein belongs to the class-II pyridoxal-phosphate-dependent aminotransferase family. Histidinol-phosphate aminotransferase subfamily. Homodimer. The cofactor is pyridoxal 5'-phosphate.

The enzyme catalyses L-histidinol phosphate + 2-oxoglutarate = 3-(imidazol-4-yl)-2-oxopropyl phosphate + L-glutamate. Its pathway is amino-acid biosynthesis; L-histidine biosynthesis; L-histidine from 5-phospho-alpha-D-ribose 1-diphosphate: step 7/9. The protein is Histidinol-phosphate aminotransferase 1 of Nitrosococcus oceani (strain ATCC 19707 / BCRC 17464 / JCM 30415 / NCIMB 11848 / C-107).